A 301-amino-acid polypeptide reads, in one-letter code: Glycine--tRNA ligase alpha subunit (301 aa).

Belongs to the class-II aminoacyl-tRNA synthetase family. As to quaternary structure, tetramer of two alpha and two beta subunits.

Its subcellular location is the cytoplasm. The enzyme catalyses tRNA(Gly) + glycine + ATP = glycyl-tRNA(Gly) + AMP + diphosphate. This chain is Glycine--tRNA ligase alpha subunit, found in Proteus mirabilis (strain HI4320).